We begin with the raw amino-acid sequence, 534 residues long: MTKYIFVTGGVVSSIGKGIVAASLGRLLKNRGLKVTIQKFDPYINIDPGTMSPYQHGEVYVTDDGAETDLDLGHYERFIDINLNKYSNVTTGKIYSEVLRKERKGEYLGATVQVIPHITDALKEKIKRAASTTDSDVIITEVGGTVGDIESLPFLEALRQMKADVGSENVMYIHTTLLPYLKAAGEMKTKPTQHSVKELRGLGIQPNMLVIRTEEPVEQGIKNKLAQFCDVNSEAVIESRDVEHLYQIPLNLQAQSMDQIVCDHLKLNAPQADMTEWSAMVDKVMNLRKTTKIALVGKYVELPDAYLSVVEALKHSGYANDTAIDLKWVNANDVTVDNAADLLGDADGIIVPGGFGQRGTEGKIQAIRYARENDVPMLGICLGMQLTCVEFARHVLNMEGANSFELEPSTKYPIIDIMRDQIDIEDMGGTLRLGLYPCKLKPGSKAAMAYNNQEVVQRRHRHRYEFNNKFRPEFEAAGFVFSGVSPDNRLVEIVELKEKKFFVAAQYHPELQSRPNRPEELYTAFVTAAIKNSN.

An amidoligase domain region spans residues 1–267 (MTKYIFVTGG…DQIVCDHLKL (267 aa)). S13 lines the CTP pocket. S13 serves as a coordination point for UTP. An ATP-binding site is contributed by 14–19 (SIGKGI). L-glutamine is bound at residue Y54. D71 lines the ATP pocket. Mg(2+)-binding residues include D71 and E141. CTP-binding positions include 148 to 150 (DIE), 188 to 193 (KTKPTQ), and K224. Residues 188–193 (KTKPTQ) and K224 each bind UTP. 240 to 242 (RDV) contacts ATP. One can recognise a Glutamine amidotransferase type-1 domain in the interval 292-534 (KIALVGKYVE…FVTAAIKNSN (243 aa)). Position 354 (G354) interacts with L-glutamine. C381 functions as the Nucleophile; for glutamine hydrolysis in the catalytic mechanism. L-glutamine is bound by residues 382-385 (LGMQ), E405, and R463. Active-site residues include H508 and E510.

This sequence belongs to the CTP synthase family. In terms of assembly, homotetramer.

The enzyme catalyses UTP + L-glutamine + ATP + H2O = CTP + L-glutamate + ADP + phosphate + 2 H(+). It catalyses the reaction L-glutamine + H2O = L-glutamate + NH4(+). The catalysed reaction is UTP + NH4(+) + ATP = CTP + ADP + phosphate + 2 H(+). Its pathway is pyrimidine metabolism; CTP biosynthesis via de novo pathway; CTP from UDP: step 2/2. With respect to regulation, allosterically activated by GTP, when glutamine is the substrate; GTP has no effect on the reaction when ammonia is the substrate. The allosteric effector GTP functions by stabilizing the protein conformation that binds the tetrahedral intermediate(s) formed during glutamine hydrolysis. Inhibited by the product CTP, via allosteric rather than competitive inhibition. Its function is as follows. Catalyzes the ATP-dependent amination of UTP to CTP with either L-glutamine or ammonia as the source of nitrogen. Regulates intracellular CTP levels through interactions with the four ribonucleotide triphosphates. This Streptococcus pyogenes serotype M1 protein is CTP synthase.